A 331-amino-acid chain; its full sequence is FMRFamide-related neuropeptides (331 aa).

Residues 1 to 25 form the signal peptide; that stretch reads MRCWSPCSLLVVIAIYCLSSHTSEA. The propeptide occupies 26–65; it reads FDLAQACVESQRLSLLPICDTIFAVQQEGAQQSADDGLRS. A phenylalanine amide mark is found at Phe-71 and Phe-83. The propeptide occupies 86–94; it reads NVPDLPFED. Phe-100 is modified (phenylalanine amide). Positions 103–168 are excised as a propeptide; the sequence is AAPQLDDLLK…YVDDVEDSDV (66 aa). Residues 122-153 form a disordered region; the sequence is QKSDDTSVRRKRSTDAAPQSNTDSAEQKNDSA. Residues Phe-174 and Phe-181 each carry the phenylalanine amide modification. Residues 184–194 constitute a propeptide that is removed on maturation; that stretch reads NPSDVGSKLTE. Phe-200 is modified (phenylalanine amide). Residues 203–205 constitute a propeptide that is removed on maturation; the sequence is DPE. Phe-211 carries the post-translational modification Phenylalanine amide. Positions 214 to 216 are excised as a propeptide; the sequence is SDD. A Phenylalanine amide modification is found at Phe-222. The propeptide occupies 225–236; that stretch reads NPGDAEDELEED. Phe-242 is modified (phenylalanine amide). A propeptide spanning residues 245–254 is cleaved from the precursor; sequence GDEEDEEEAE. Phe-260 carries the phenylalanine amide modification. A propeptide spanning residues 263–265 is cleaved from the precursor; the sequence is DPE. Phenylalanine amide is present on Phe-271. Positions 274 to 277 are excised as a propeptide; that stretch reads NGEE. At Phe-283 the chain carries Phenylalanine amide. The propeptide occupies 286-293; the sequence is NPEEPEAD. Phe-299 carries the post-translational modification Phenylalanine amide. The propeptide occupies 302 to 312; sequence GGEEDDVNTEE. Phenylalanine amide is present on Phe-318. The propeptide occupies 321–331; that stretch reads SAEKCKGCLEG.

The protein belongs to the FARP (FMRFamide related peptide) family. Present ubiquitously in the brain and regions of the central nervous system as well as in the periphery and throughout the dermal chromatophore layer (at protein level).

The protein resides in the secreted. Excitatory neurotransmitters that directly modulate chromatophore function by activating chromatophore expansion at the chromatophore neuromuscular junction. In Sepia officinalis (Common cuttlefish), this protein is FMRFamide-related neuropeptides.